The following is a 268-amino-acid chain: tRNA pseudouridine synthase A (268 aa).

Residue aspartate 63 is the Nucleophile of the active site. Position 122 (tyrosine 122) interacts with substrate.

Belongs to the tRNA pseudouridine synthase TruA family. As to quaternary structure, homodimer.

It carries out the reaction uridine(38/39/40) in tRNA = pseudouridine(38/39/40) in tRNA. Its function is as follows. Formation of pseudouridine at positions 38, 39 and 40 in the anticodon stem and loop of transfer RNAs. This Treponema denticola (strain ATCC 35405 / DSM 14222 / CIP 103919 / JCM 8153 / KCTC 15104) protein is tRNA pseudouridine synthase A.